The sequence spans 30 residues: Babycurus-toxin 1 (30 aa).

Positions 2 to 30 (KDGYPTNSKGCKISGCLPGENKFCLNECQ) constitute an LCN-type CS-alpha/beta domain.

Belongs to the long (4 C-C) scorpion toxin superfamily. Sodium channel inhibitor family. In terms of tissue distribution, expressed by the venom gland.

It localises to the secreted. In terms of biological role, binds to sodium channels (Nav) and inhibits both the activation and inactivation of the activated channels, thereby blocking neuronal transmission. This is Babycurus-toxin 1 from Babycurus centrurimorphus (East African scorpion).